The following is an 869-amino-acid chain: Alanine--tRNA ligase (869 aa).

Residues H559, H563, C660, and H664 each coordinate Zn(2+).

The protein belongs to the class-II aminoacyl-tRNA synthetase family. The cofactor is Zn(2+).

It localises to the cytoplasm. The catalysed reaction is tRNA(Ala) + L-alanine + ATP = L-alanyl-tRNA(Ala) + AMP + diphosphate. Functionally, catalyzes the attachment of alanine to tRNA(Ala) in a two-step reaction: alanine is first activated by ATP to form Ala-AMP and then transferred to the acceptor end of tRNA(Ala). Also edits incorrectly charged Ser-tRNA(Ala) and Gly-tRNA(Ala) via its editing domain. The chain is Alanine--tRNA ligase from Janthinobacterium sp. (strain Marseille) (Minibacterium massiliensis).